Reading from the N-terminus, the 1974-residue chain is Protein Ycf2 (1974 aa).

Residues S219–R246 are disordered. G1308–S1315 lines the ATP pocket.

It belongs to the Ycf2 family.

Its subcellular location is the plastid. The protein localises to the chloroplast stroma. In terms of biological role, probable ATPase of unknown function. Its presence in a non-photosynthetic plant (Epifagus virginiana) and experiments in tobacco indicate that it has an essential function which is probably not related to photosynthesis. The protein is Protein Ycf2 of Jasminum nudiflorum (Winter jasmine).